The following is a 122-amino-acid chain: Beta-2-microglobulin (122 aa).

Positions 1-23 (MFLRSTFVAALVACLAYIHLGDA) are cleaved as a signal peptide. An Ig-like C1-type domain is found at 28 to 117 (PKVQIYSRNV…STLREATRFT (90 aa)). Cysteines 48 and 103 form a disulfide.

It belongs to the beta-2-microglobulin family. Heterodimer of an alpha chain and a beta chain. Beta-2-microglobulin is the beta-chain of major histocompatibility complex class I molecules.

The protein resides in the secreted. Component of the class I major histocompatibility complex (MHC). Involved in the presentation of peptide antigens to the immune system. The polypeptide is Beta-2-microglobulin (b2m) (Acipenser baerii (Siberian sturgeon)).